The primary structure comprises 255 residues: Pyrroloquinoline-quinone synthase (255 aa).

It belongs to the PqqC family.

The catalysed reaction is 6-(2-amino-2-carboxyethyl)-7,8-dioxo-1,2,3,4,7,8-hexahydroquinoline-2,4-dicarboxylate + 3 O2 = pyrroloquinoline quinone + 2 H2O2 + 2 H2O + H(+). Its pathway is cofactor biosynthesis; pyrroloquinoline quinone biosynthesis. Ring cyclization and eight-electron oxidation of 3a-(2-amino-2-carboxyethyl)-4,5-dioxo-4,5,6,7,8,9-hexahydroquinoline-7,9-dicarboxylic-acid to PQQ. This chain is Pyrroloquinoline-quinone synthase, found in Granulibacter bethesdensis (strain ATCC BAA-1260 / CGDNIH1).